The sequence spans 278 residues: Formamidopyrimidine-DNA glycosylase (278 aa).

Residue Pro2 is the Schiff-base intermediate with DNA of the active site. Residue Glu3 is the Proton donor of the active site. Residue Lys60 is the Proton donor; for beta-elimination activity of the active site. His95 and Arg114 together coordinate DNA. An FPG-type zinc finger spans residues 244 to 278 (WVYRRGGEPCRRCGTIIRRDKLSGRSTHWCPTCQG). Residue Arg268 is the Proton donor; for delta-elimination activity of the active site.

Belongs to the FPG family. As to quaternary structure, monomer. Zn(2+) serves as cofactor.

The catalysed reaction is Hydrolysis of DNA containing ring-opened 7-methylguanine residues, releasing 2,6-diamino-4-hydroxy-5-(N-methyl)formamidopyrimidine.. It catalyses the reaction 2'-deoxyribonucleotide-(2'-deoxyribose 5'-phosphate)-2'-deoxyribonucleotide-DNA = a 3'-end 2'-deoxyribonucleotide-(2,3-dehydro-2,3-deoxyribose 5'-phosphate)-DNA + a 5'-end 5'-phospho-2'-deoxyribonucleoside-DNA + H(+). Involved in base excision repair of DNA damaged by oxidation or by mutagenic agents. Acts as a DNA glycosylase that recognizes and removes damaged bases. Has a preference for oxidized purines, such as 7,8-dihydro-8-oxoguanine (8-oxoG). Has AP (apurinic/apyrimidinic) lyase activity and introduces nicks in the DNA strand. Cleaves the DNA backbone by beta-delta elimination to generate a single-strand break at the site of the removed base with both 3'- and 5'-phosphates. The chain is Formamidopyrimidine-DNA glycosylase from Parasynechococcus marenigrum (strain WH8102).